Consider the following 151-residue polypeptide: Phosphoribosyl-AMP cyclohydrolase (151 aa).

Aspartate 94 is a binding site for Mg(2+). A Zn(2+)-binding site is contributed by cysteine 95. Positions 96 and 98 each coordinate Mg(2+). 2 residues coordinate Zn(2+): cysteine 112 and cysteine 119.

It belongs to the PRA-CH family. Homodimer. Requires Mg(2+) as cofactor. Zn(2+) serves as cofactor.

It is found in the cytoplasm. The enzyme catalyses 1-(5-phospho-beta-D-ribosyl)-5'-AMP + H2O = 1-(5-phospho-beta-D-ribosyl)-5-[(5-phospho-beta-D-ribosylamino)methylideneamino]imidazole-4-carboxamide. The protein operates within amino-acid biosynthesis; L-histidine biosynthesis; L-histidine from 5-phospho-alpha-D-ribose 1-diphosphate: step 3/9. In terms of biological role, catalyzes the hydrolysis of the adenine ring of phosphoribosyl-AMP. This is Phosphoribosyl-AMP cyclohydrolase from Rhodopseudomonas palustris (strain ATCC BAA-98 / CGA009).